The sequence spans 487 residues: MRVETHSPSFTNPNPAEACSGDPTEMGSRLSGVSRAPLPHAAAGRDGEAAAAGKIGAFLRKAVAAQSYGLMFANGKLFEATGDALEKREQYGFSALKRLDGLSRRNLDAVAARLGALDSAEQALKQHIMAGAWHFRHQSNAALDDGEKATIASNHLLSRQARSSGGNTFADDKALLSNHDFVFFGVEFSGRDKNDKPLNHKHSTMDFGANAYVVSDALPACRNGYLTLTDHFFNRVPGGREAEHQDFVGRFAQMGRESGRWIHEGKYRQNAPLFCYRDMKAAVALHLIEFMRNSQDEAFKAYVFDQATQSGPALDRVLNSVFQAEFHIPRLMATTDYAKHPLRPMLLKEAVDSVNLPALSDLVSNRGDAVTAMWHAINKGKDEVVAYLLGNWQFEAKDFSHAPAGFYHELNYALSESGASVYILDQFLSRGWAAVNAPFEHVNRGDTMLDNAVKYGNREMVAALIKHGADRNLLSKWHKSDLDALLA.

The segment covering 1–14 (MRVETHSPSFTNPN) has biased composition (polar residues). Positions 1–41 (MRVETHSPSFTNPNPAEACSGDPTEMGSRLSGVSRAPLPHA) are disordered. NAD(+)-binding residues include histidine 137, glutamine 138, serine 139, serine 164, asparagine 167, and threonine 168. Residue glutamate 325 is part of the active site. ANK repeat units lie at residues 368–398 (DAVT…EAKD) and 444–473 (RGDT…DRNL).

The protein belongs to the OspC family.

The protein resides in the secreted. The protein localises to the host cytoplasm. It catalyses the reaction L-arginyl-[protein] + NAD(+) = ADP-riboxanated L-argininyl-[protein] + nicotinamide + NH4(+) + H(+). Its function is as follows. ADP-riboxanase effector that inhibits host cell pyroptosis. Acts by mediating arginine ADP-riboxanation of host CASP4/CASP11, blocking CASP4/CASP11 autoprocessing. This prevents CASP4 activation and ability to recognize and cleave GSDMD, thereby inhibiting LPS-induced pyroptosis. ADP-riboxanation takes place in two steps: OspC3 first catalyzes ADP-ribosylation of target Arg, and then initiates a deamination to remove one N-omega group. This is Arginine ADP-riboxanase OspC3 from Chromobacterium sp. (strain ATCC 53434 / SC 14030).